The primary structure comprises 526 residues: Type 2 glycosyltransferase (526 aa).

The helical transmembrane segment at 25–45 threads the bilayer; the sequence is PSFDFWYSSTFWLYLFLGLWF. Residues Asn-298 and Asn-317 are each glycosylated (N-linked (GlcNAc...) asparagine). 3 consecutive transmembrane segments (helical) span residues 340 to 360, 375 to 395, and 403 to 423; these read FATF…SCWW, WSQF…GLFI, and FLPV…YALI. N-linked (GlcNAc...) asparagine glycans are attached at residues Asn-426 and Asn-517.

Belongs to the GT2 glycosyltransferase family.

The protein resides in the cell membrane. The protein localises to the secreted. It localises to the cell wall. Functionally, glycosyltransferase involved in the maintenance of the outermost surface of the fungal cell wall. Likely functions in the synthesis of a currently unknown, potentially minor but widespread, extracellular or outer cell wall polysaccharide which plays a key role in facilitating many interactions between plants and fungi by enabling hyphal growth on solid matrices. In Gibberella zeae (strain ATCC MYA-4620 / CBS 123657 / FGSC 9075 / NRRL 31084 / PH-1) (Wheat head blight fungus), this protein is Type 2 glycosyltransferase.